The sequence spans 429 residues: UDP-N-acetylglucosamine 1-carboxyvinyltransferase (429 aa).

22–23 (KN) contributes to the phosphoenolpyruvate binding site. Residue arginine 102 coordinates UDP-N-acetyl-alpha-D-glucosamine. Catalysis depends on cysteine 126, which acts as the Proton donor. At cysteine 126 the chain carries 2-(S-cysteinyl)pyruvic acid O-phosphothioketal. The UDP-N-acetyl-alpha-D-glucosamine site is built by aspartate 316 and isoleucine 338.

It belongs to the EPSP synthase family. MurA subfamily.

Its subcellular location is the cytoplasm. The enzyme catalyses phosphoenolpyruvate + UDP-N-acetyl-alpha-D-glucosamine = UDP-N-acetyl-3-O-(1-carboxyvinyl)-alpha-D-glucosamine + phosphate. The protein operates within cell wall biogenesis; peptidoglycan biosynthesis. In terms of biological role, cell wall formation. Adds enolpyruvyl to UDP-N-acetylglucosamine. The sequence is that of UDP-N-acetylglucosamine 1-carboxyvinyltransferase from Methylorubrum extorquens (strain PA1) (Methylobacterium extorquens).